Reading from the N-terminus, the 434-residue chain is Pre-mRNA-splicing factor PRP46 (434 aa).

WD repeat units lie at residues 120-160 (GHTG…LKIT), 163-202 (GHVMSVRDIAISKRHPYMFSASEDKLVKCWDLERNTAIRD), 205-244 (GHLSGVHTVDVHPSLDIIATAGRDAVVRLWDIRSRSEIMV), 247-288 (GHKS…KVLT), 290-329 (HSRNIRDLTLHPAEFSFASVSTNDVRSWKLPEGQLLTNFQ), 331-369 (QNTGILNTVSINHDNVLLAGGDDGTLCFYDYKTGHKYQS), and 380-419 (ESERSILCSTFDVTGTRLITGEGDKSIKIWKQVPDATEDT).

Belongs to the WD repeat PRL1/PRL2 family. As to quaternary structure, associated with the spliceosome.

Its subcellular location is the cytoplasm. The protein localises to the nucleus. In terms of biological role, involved in pre-mRNA splicing and required for cell cycle progression at G2/M. This chain is Pre-mRNA-splicing factor PRP46 (PRP46), found in Kluyveromyces lactis (strain ATCC 8585 / CBS 2359 / DSM 70799 / NBRC 1267 / NRRL Y-1140 / WM37) (Yeast).